The chain runs to 365 residues: Anhydro-N-acetylmuramic acid kinase (365 aa).

9-16 (GTSLDGVD) provides a ligand contact to ATP.

It belongs to the anhydro-N-acetylmuramic acid kinase family.

The catalysed reaction is 1,6-anhydro-N-acetyl-beta-muramate + ATP + H2O = N-acetyl-D-muramate 6-phosphate + ADP + H(+). It participates in amino-sugar metabolism; 1,6-anhydro-N-acetylmuramate degradation. The protein operates within cell wall biogenesis; peptidoglycan recycling. In terms of biological role, catalyzes the specific phosphorylation of 1,6-anhydro-N-acetylmuramic acid (anhMurNAc) with the simultaneous cleavage of the 1,6-anhydro ring, generating MurNAc-6-P. Is required for the utilization of anhMurNAc either imported from the medium or derived from its own cell wall murein, and thus plays a role in cell wall recycling. This is Anhydro-N-acetylmuramic acid kinase from Rhodopseudomonas palustris (strain BisB18).